Here is a 196-residue protein sequence, read N- to C-terminus: Prefoldin subunit 3 (196 aa).

Ala-2 is modified (N-acetylalanine). Lys-58 bears the N6-acetyllysine mark.

This sequence belongs to the prefoldin subunit alpha family. Heterohexamer of two PFD-alpha type and four PFD-beta type subunits. Binds to the C-terminal part of VHL.

The protein resides in the cytoplasm. It is found in the nucleus. Binds specifically to cytosolic chaperonin (c-CPN) and transfers target proteins to it. Binds to nascent polypeptide chain and promotes folding in an environment in which there are many competing pathways for nonnative proteins. This is Prefoldin subunit 3 (Vbp1) from Mus musculus (Mouse).